We begin with the raw amino-acid sequence, 447 residues long: 26S proteasome non-ATPase regulatory subunit 12 (447 aa).

Positions Met1–Pro23 are disordered. In terms of domain architecture, PCI spans Asn240–Asp411.

It belongs to the proteasome subunit p55 family.

Acts as a regulatory subunit of the 26S proteasome which is involved in the ATP-dependent degradation of ubiquitinated proteins. The sequence is that of 26S proteasome non-ATPase regulatory subunit 12 (psmD12) from Dictyostelium discoideum (Social amoeba).